We begin with the raw amino-acid sequence, 550 residues long: Amino acid transporter AVT1D (550 aa).

Positions 1–16 are enriched in basic and acidic residues; sequence MKLDEEFLHDRDHSFL. Residues 1–99 are disordered; the sequence is MKLDEEFLHD…FMPQSSSRRL (99 aa). Residues 84–99 are compositionally biased toward polar residues; it reads TPPSVSFMPQSSSRRL. Helical transmembrane passes span 164–184, 189–209, 236–256, 264–286, 308–328, 345–365, 375–395, 424–444, 459–479, 481–501, and 521–541; these read SVLN…PYAI, WLGL…GVLM, FIIS…YIIM, LFPN…IFAI, SVGG…VGAV, LPVT…FPNI, FPLV…AVAV, VWTA…PIVM, GVSI…ALSV, FFAI…ALIF, and LCIF…YSAI.

It belongs to the amino acid/polyamine transporter 2 family. Amino acid/auxin permease (AAAP) (TC 2.A.18.5) subfamily.

The protein resides in the membrane. This is Amino acid transporter AVT1D from Arabidopsis thaliana (Mouse-ear cress).